Consider the following 1549-residue polypeptide: MSPLLRSIFNITKIFNQYASHDCDGTTLSKKDLKNLLEREFGEILRKPHDPETVDLVLELQDRDRDGLIDFHEFLAIVFKVAAACYYALGQASGLNEKEAKCERKGNPLQDRRREDQRRFEPQDRQLEERRLKRQELEELAEEEELREKQVRREQRLQRREQEEYGGEEELQQRPKGRELEELLNREQRFERQEQRERQRLQVEQQQRQRGELRERQEEVQLQKRETQELQRERLEEEQQLQKQKRGLEERLLEQERREQELRRKEQERREQQLRQEQEEATQEEISERGESRTSRCQWQLESEADARQRKVYSRPHRQEQQSRRQEQELLERQQEQQISEEVQSLQEDQGRQRLKQEQRYDQNWRWQLEEESQRRRYTLYAKPAQREQVREEEQLRLKEEKLQREKRRQERERQYREVELQREEERLQREEEQLQREEREKRRRQEREKQYLEKVELWEEEQLQREEREKRRQEREKQYLEKVELREEEQLQRQEREKRRQERERQYLEKVELQEEEQLQREEREKRRQERERQYLEKVELQEEEQLQRQEREKRRQEREKQYLEKVELQEEEQLQRQERQKRRQEREKQYLEKVELQEEEQLQRQEREKRRQERERQYLEKVELQEEEQVQRQEREKRRQERERQYLEKELQRQEERLQEEEQLLREEREKRRQERERQYLEKVELQEEEQLQREEREKRRQERERQYLEKEELQRQEERLQREKEQLQREDREKRRQVRERKYLEEELQQEEDRLQREKQLLREDREKRQYLEKVELQREEEQLQREKRRQERERQYREEELLREEERLHRKEQQLQREECEKRRRQELERQLEEEELQRLDRKRQFRDDDQHQNEVRNSRVYSKHRENKEKSRQLDDSWVRESQFQQDLRPLQDEQEEKREREQEWRSRQKRDSQFPAEQLLEREQQKETERRDRKFREEEQLLKGQREEKIRYLEEDRKFREEEQQLRRLEREQQLRQERDRKFREELSRQERDRKFREEEQLLQEREEQLRRQERDRKFREEEQLLQEREEQLRRQERDRKFREEEQLLQEREEQLRRQERDRKFREEEQQLRLLEREQQLRQERNRKFREEQLLREREEQLRLQEGEPQLRQKRDRKFHEEEQLLQEREEQLRRQERDRKFREEAQILKEREEQLRRQERDRKFREEEQLLQEREELRRQEREPQLRQERDRKFREEEQLLQEREKLRRQEREPQLRQERDRKFHEEEQLLQEREEQLRRQERDRKFREEAQLLQEREEQLRRQERDRKFREEEQLLQEREEQLRRQERDRKFREEEQLLQEREEQLRRQERDRKFREEEQLLKESEEQLRRQERDRKFHEKEHLLREREEQQLRRQELEGVFSQEEQLRRAEQEEEQRRQRQRDRKFLEEEQSLQREREEEKRRVQEQDRKFLEQEEQLHREEQEELRRRQQLDQQYRAEEQFAREEKRRRQEQELRQEEQRRRQERERKFREEEQLRRQQQEEQKRRQERDVQQSRRQVWEEDKGRRQVLEAGKRQFASAPVRSSPLYEYIQEQRSQYRP.

Residues 1 to 91 (MSPLLRSIFN…AAACYYALGQ (91 aa)) form an S-100-like region. EF-hand domains lie at 23–48 (CDGT…LRKP) and 49–84 (HDPE…VAAA). Ca(2+)-binding residues include Thr-27, Asp-32, Asp-62, Asp-64, Asp-66, and Glu-73. Disordered stretches follow at residues 97-125 (EKEA…PQDR), 157-180 (LQRR…GREL), 262-359 (LRRK…KQEQ), and 404-448 (QREK…RQER). 3 stretches are compositionally biased toward basic and acidic residues: residues 171–180 (LQQRPKGREL), 262–278 (LRRK…RQEQ), and 317–335 (HRQE…ERQQ). Low complexity predominate over residues 336–348 (EQQISEEVQSLQE). Positions 349–359 (DQGRQRLKQEQ) are enriched in basic and acidic residues. Repeat copies occupy residues 413–448 (ERQY…RQER), 449–476 (EKQY…RQER), 477–504 (EKQY…RQER), 505–532 (ERQY…RQER), 533–560 (ERQY…RQER), 561–588 (EKQY…RQER), 589–616 (EKQY…RQER), 617–644 (ERQY…RQER), 645–678 (ERQY…RQER), 679–706 (ERQY…RQER), 707–742 (ERQY…RQVR), 743–771 (ERKY…DREK), 772–796 (RQYL…RQER), and 797–832 (ERQY…RQEL). The 14 X 28 AA approximate tandem repeats stretch occupies residues 413-832 (ERQYREVELQ…ECEKRRRQEL (420 aa)). Disordered stretches follow at residues 782-803 (REEE…YREE), 839-942 (EELQ…RKFR), and 980-1000 (QLRQ…ERDR). 3 stretches are compositionally biased toward basic and acidic residues: residues 850–884 (FRDD…DSWV), 895–918 (PLQD…KRDS), and 925–942 (LLER…RKFR). Tandem repeats lie at residues 938–961 (DRKF…YLEE), 962–985 (DRKF…RQER), 986–1021 (DRKF…RQER), 1022–1044 (DRKF…RQER), 1045–1067 (DRKF…RQER), 1068–1090 (DRKF…LRQE), 1091–1121 (RNRK…RQKR), 1122–1144 (DRKF…RQER), 1145–1167 (DRKF…RQER), 1168–1197 (DRKF…RQER), 1198–1227 (DRKF…RQER), 1228–1250 (DRKF…RQER), 1251–1273 (DRKF…RQER), 1274–1296 (DRKF…RQER), 1297–1319 (DRKF…RQER), 1320–1342 (DRKF…RQER), 1343–1368 (DRKF…ELEG), 1369–1391 (VFSQ…QRQR), 1392–1416 (DRKF…VQEQ), 1417–1439 (DRKF…RRRQ), 1440–1461 (QLDQ…RRQE), 1462–1484 (QELR…EEEQ), and 1485–1507 (LRRQ…SRRQ). Residues 938-1507 (DRKFREEEQL…ERDVQQSRRQ (570 aa)) form a 23 X 23 AA approximate tandem repeats region. The segment covering 1489 to 1523 (QQEEQKRRQERDVQQSRRQVWEEDKGRRQVLEAGK) has biased composition (basic and acidic residues). The disordered stretch occupies residues 1489–1549 (QQEEQKRRQE…IQEQRSQYRP (61 aa)).

Belongs to the S100-fused protein family. Homodimer. In terms of processing, substrate of transglutaminase. Some 200 arginines are probably converted to citrullines by peptidylarginine deimidase. As to expression, found in the hard keratinizing tissues such as the inner root sheath (IRS) of hair follicles and medulla, and in the epithelia of the tongue, hoof and rumen.

Its function is as follows. Intermediate filament-associated protein that associates in regular arrays with keratin intermediate filaments (KIF) of the inner root sheath cells of the hair follicle and the granular layer of the epidermis. It later becomes cross-linked to KIF by isodipeptide bonds. It may serve as scaffold protein, together with involucrin, in the organization of the cell envelope or even anchor the cell envelope to the KIF network. It may be involved in its own calcium-dependent postsynthetic processing during terminal differentiation. In Ovis aries (Sheep), this protein is Trichohyalin (TCHH).